We begin with the raw amino-acid sequence, 376 residues long: Probable ureide permease A3 (376 aa).

Residues 1–9 (HLVESKGGA) lie on the Extracellular side of the membrane. A helical transmembrane segment spans residues 10–30 (IACMFLALFFLGTWPALLTML). The Cytoplasmic segment spans residues 31 to 41 (ERRGRLPQHTY). Residues 42 to 62 (LDYSITNFFAALLIAFTFGEI) form a helical membrane-spanning segment. Residues 63 to 80 (GKGKPDEPNFLAQLAQDN) lie on the Extracellular side of the membrane. The chain crosses the membrane as a helical span at residues 81–101 (WPSVLFAMGGGVVLSLGNLSS). The Cytoplasmic segment spans residues 102–103 (QY). The helical transmembrane segment at 104–124 (AFAFVGLSVTEVITASITVVI) threads the bilayer. Residues 125 to 137 (GTTLNYFLDDKIN) lie on the Extracellular side of the membrane. The helical transmembrane segment at 138 to 158 (KAEILFPGVGCFLIAVFLGFC) threads the bilayer. Topologically, residues 159–231 (RFNSSNASDN…RAIKVFGKST (73 aa)) are cytoplasmic. 223–230 (AIKVFGKS) contacts ATP. Residues 232 to 252 (LIGLALTFSAGLCFSMFSPAF) form a helical membrane-spanning segment. The Extracellular segment spans residues 253-274 (NLATNDQWHTLPNGIPHLTVYT). Residues 275–295 (AFFYFSISCFVIAIILNITFL) form a helical membrane-spanning segment. At 296–317 (YHPVLNLPKSSLKAYLADSDGR) the chain is on the cytoplasmic side. The chain crosses the membrane as a helical span at residues 318–338 (IWALLAGLLCGFGNSLQFMGG). At 339–376 (QAAGYQQQSLCRHFLCKHFWGVLLFGEYRRSSRKTYIC) the chain is on the extracellular side.

The protein belongs to the plant ureide permease (TC 2.A.7.19) family.

The protein localises to the membrane. Transports a wide spectrum of oxo derivatives of heterocyclic nitrogen compounds. The sequence is that of Probable ureide permease A3 (A3) from Vigna unguiculata (Cowpea).